The sequence spans 1416 residues: DNA-directed RNA polymerase subunit beta' (1416 aa).

Positions 71, 73, 86, and 89 each coordinate Zn(2+). 3 residues coordinate Mg(2+): Asp-461, Asp-463, and Asp-465. 4 residues coordinate Zn(2+): Cys-815, Cys-889, Cys-896, and Cys-899.

This sequence belongs to the RNA polymerase beta' chain family. In terms of assembly, the RNAP catalytic core consists of 2 alpha, 1 beta, 1 beta' and 1 omega subunit. When a sigma factor is associated with the core the holoenzyme is formed, which can initiate transcription. Mg(2+) is required as a cofactor. Requires Zn(2+) as cofactor.

It carries out the reaction RNA(n) + a ribonucleoside 5'-triphosphate = RNA(n+1) + diphosphate. Functionally, DNA-dependent RNA polymerase catalyzes the transcription of DNA into RNA using the four ribonucleoside triphosphates as substrates. In Haemophilus influenzae (strain PittGG), this protein is DNA-directed RNA polymerase subunit beta'.